Reading from the N-terminus, the 33-residue chain is Mytimycin (33 aa).

It localises to the secreted. Has antifungal activity against N.crassa and F.culmorum. This is Mytimycin from Mytilus edulis (Blue mussel).